The sequence spans 132 residues: MSVSDPLGDMLTRIRNAVGRKKTKVSTPASKLRARVLDVLQAEGYIRAYTQSEFENGKAEIEIELKYYEGVPVIREITRVSKPGRRVYVSVKSIPQVANGLGISILSTPKGVMADHEAREQNVGGELLCRIF.

Belongs to the universal ribosomal protein uS8 family. As to quaternary structure, part of the 30S ribosomal subunit. Contacts proteins S5 and S12.

Its function is as follows. One of the primary rRNA binding proteins, it binds directly to 16S rRNA central domain where it helps coordinate assembly of the platform of the 30S subunit. In Brucella abortus (strain S19), this protein is Small ribosomal subunit protein uS8.